We begin with the raw amino-acid sequence, 114 residues long: Large ribosomal subunit protein eL30 (114 aa).

This sequence belongs to the eukaryotic ribosomal protein eL30 family.

The protein is Large ribosomal subunit protein eL30 (RPL30) of Branchiostoma belcheri (Amphioxus).